A 250-amino-acid chain; its full sequence is MSITAVIPARYASSRFPGKPLARILGKTMIQRVYERTAQAACIDRVVVATDDSRIADVVSGFGGEVQMTRADHATGTDRLAEVTARIDTQLIVNVQGDEPLIDPHMIEAAVAPLSEDPAIPMGTLKTPLLNWQEYRDPNVVKVVTDRRGFALYFSRAPIPHPRELAVDDSAVSPASMGLFRHIGLYVYRKDFLLTFAGLPESPLERLEKLEQLRALENGYAIRVVETDRVSLGVDTPEDLVRVEAHLRGL.

Belongs to the KdsB family.

Its subcellular location is the cytoplasm. The enzyme catalyses 3-deoxy-alpha-D-manno-oct-2-ulosonate + CTP = CMP-3-deoxy-beta-D-manno-octulosonate + diphosphate. The protein operates within nucleotide-sugar biosynthesis; CMP-3-deoxy-D-manno-octulosonate biosynthesis; CMP-3-deoxy-D-manno-octulosonate from 3-deoxy-D-manno-octulosonate and CTP: step 1/1. It functions in the pathway bacterial outer membrane biogenesis; lipopolysaccharide biosynthesis. Its function is as follows. Activates KDO (a required 8-carbon sugar) for incorporation into bacterial lipopolysaccharide in Gram-negative bacteria. This Syntrophotalea carbinolica (strain DSM 2380 / NBRC 103641 / GraBd1) (Pelobacter carbinolicus) protein is 3-deoxy-manno-octulosonate cytidylyltransferase.